The following is a 380-amino-acid chain: Mitogen-activated protein kinase 3 (380 aa).

Alanine 2 carries the N-acetylalanine modification. The Protein kinase domain maps to tyrosine 43–leucine 331. ATP-binding positions include isoleucine 49–valine 57 and lysine 72. Residue aspartate 167 is the Proton acceptor of the active site. At threonine 199 the chain carries Phosphothreonine. The residue at position 203 (threonine 203) is a Phosphothreonine; by MAP2K1 and MAP2K2. The TXY motif lies at threonine 203–tyrosine 205. Tyrosine 205 carries the post-translational modification Phosphotyrosine; by MAP2K1 and MAP2K2. At threonine 208 the chain carries Phosphothreonine; by autocatalysis.

Belongs to the protein kinase superfamily. CMGC Ser/Thr protein kinase family. MAP kinase subfamily. As to quaternary structure, binds both upstream activators and downstream substrates in multimolecular complexes. Found in a complex with at least BRAF, HRAS, MAP2K1/MEK1, MAPK3 and RGS14. Interacts with TPR. Interacts with ADAM15, ARRB2, CANX, DAPK1 (via death domain), HSF4, IER3, MAP2K1/MEK1, NISCH, and SGK1. Interacts with MORG1. Interacts with PEA15. Interacts with isoform 1 of MKNK2 and this binding prevents from dephosphorylation and inactivation. Interacts with CDKN2AIP. Interacts with HSF1 (via D domain and preferentially with hyperphosphorylated form); this interaction occurs upon heat shock. Interacts with CAVIN4. Interacts with GIT1; this interaction is necessary for MAPK3 localization to focal adhesions. Interacts with ZNF263. Interacts with EBF4. Requires Mg(2+) as cofactor. In terms of processing, dually phosphorylated on Thr-203 and Tyr-205, which activates the enzyme. Ligand-activated ALK induces tyrosine phosphorylation. Dephosphorylated by PTPRJ at Tyr-205. Autophosphorylated on threonine and tyrosine residues in vitro. Phosphorylated upon FLT3 and KIT signaling. Post-translationally, ubiquitinated by TRIM15 via 'Lys-63'-linked ubiquitination; leading to activation. Deubiquitinated by CYLD.

Its subcellular location is the cytoplasm. The protein resides in the nucleus. It localises to the membrane. It is found in the caveola. The protein localises to the cell junction. Its subcellular location is the focal adhesion. It carries out the reaction L-seryl-[protein] + ATP = O-phospho-L-seryl-[protein] + ADP + H(+). The catalysed reaction is L-threonyl-[protein] + ATP = O-phospho-L-threonyl-[protein] + ADP + H(+). With respect to regulation, phosphorylated by MAP2K1/MEK1 and MAP2K2/MEK2 on Thr-203 and Tyr-205 in response to external stimuli like insulin or NGF. Both phosphorylations are required for activity. This phosphorylation causes dramatic conformational changes, which enable full activation and interaction of MAPK1/ERK2 with its substrates. Dephosphorylated and inactivated by DUSP3, DUSP6 and DUSP9. In terms of biological role, serine/threonine kinase which acts as an essential component of the MAP kinase signal transduction pathway. MAPK1/ERK2 and MAPK3/ERK1 are the 2 MAPKs which play an important role in the MAPK/ERK cascade. They participate also in a signaling cascade initiated by activated KIT and KITLG/SCF. Depending on the cellular context, the MAPK/ERK cascade mediates diverse biological functions such as cell growth, adhesion, survival and differentiation through the regulation of transcription, translation, cytoskeletal rearrangements. The MAPK/ERK cascade also plays a role in initiation and regulation of meiosis, mitosis, and postmitotic functions in differentiated cells by phosphorylating a number of transcription factors. About 160 substrates have already been discovered for ERKs. Many of these substrates are localized in the nucleus, and seem to participate in the regulation of transcription upon stimulation. However, other substrates are found in the cytosol as well as in other cellular organelles, and those are responsible for processes such as translation, mitosis and apoptosis. Moreover, the MAPK/ERK cascade is also involved in the regulation of the endosomal dynamics, including lysosome processing and endosome cycling through the perinuclear recycling compartment (PNRC); as well as in the fragmentation of the Golgi apparatus during mitosis. The substrates include transcription factors (such as ATF2, BCL6, ELK1, ERF, FOS, HSF4 or SPZ1), cytoskeletal elements (such as CANX, CTTN, GJA1, MAP2, MAPT, PXN, SORBS3 or STMN1), regulators of apoptosis (such as BAD, BTG2, CASP9, DAPK1, IER3, MCL1 or PPARG), regulators of translation (such as EIF4EBP1) and a variety of other signaling-related molecules (like ARHGEF2, DEPTOR, FRS2 or GRB10). Protein kinases (such as RAF1, RPS6KA1/RSK1, RPS6KA3/RSK2, RPS6KA2/RSK3, RPS6KA6/RSK4, SYK, MKNK1/MNK1, MKNK2/MNK2, RPS6KA5/MSK1, RPS6KA4/MSK2, MAPKAPK3 or MAPKAPK5) and phosphatases (such as DUSP1, DUSP4, DUSP6 or DUSP16) are other substrates which enable the propagation the MAPK/ERK signal to additional cytosolic and nuclear targets, thereby extending the specificity of the cascade. This Mus musculus (Mouse) protein is Mitogen-activated protein kinase 3 (Mapk3).